Consider the following 354-residue polypeptide: DNA ligase C2 (354 aa).

The active-site N6-AMP-lysine intermediate is the K29.

The protein belongs to the ATP-dependent DNA ligase family.

The enzyme catalyses ATP + (deoxyribonucleotide)n-3'-hydroxyl + 5'-phospho-(deoxyribonucleotide)m = (deoxyribonucleotide)n+m + AMP + diphosphate.. DNA ligase that seals nicks in double-stranded DNA during DNA replication, DNA recombination and DNA repair. Has weak intrinsic nick joining activities and accumulates DNA-adenylate. Acts as a backup for LigD in the Ku-LigD-dependent NHEJ pathway. In Mycolicibacterium smegmatis (strain ATCC 700084 / mc(2)155) (Mycobacterium smegmatis), this protein is DNA ligase C2 (ligC2).